Here is a 227-residue protein sequence, read N- to C-terminus: MAYPMQLGFQDATSPIMEELLHFHDHTLMIVFLISSLVLYIISLMLTTKLTHTSTMDAQEVETVWTILPAIILILIALPSLRILYMMDEINNPSLTVKTMGHQWYWSYEYTDYEDLSFDSYMIPTSELKPGELRLLEVDNRVVLPMEMTVRMLVSSEDVLHSWAVPSLGLKTDAIPGRLNQATLMSTRPGLYYGQCSEICGSNHSFMPIVLELVPLKHFEEWSASMS.

The Mitochondrial intermembrane portion of the chain corresponds to 1-14 (MAYPMQLGFQDATS). Residues 15 to 45 (PIMEELLHFHDHTLMIVFLISSLVLYIISLM) form a helical membrane-spanning segment. At 46-59 (LTTKLTHTSTMDAQ) the chain is on the mitochondrial matrix side. Residues 60–87 (EVETVWTILPAIILILIALPSLRILYMM) traverse the membrane as a helical segment. Topologically, residues 88 to 227 (DEINNPSLTV…HFEEWSASMS (140 aa)) are mitochondrial intermembrane. Residues histidine 161, cysteine 196, glutamate 198, cysteine 200, histidine 204, and methionine 207 each contribute to the Cu cation site. Glutamate 198 lines the Mg(2+) pocket.

This sequence belongs to the cytochrome c oxidase subunit 2 family. In terms of assembly, component of the cytochrome c oxidase (complex IV, CIV), a multisubunit enzyme composed of 14 subunits. The complex is composed of a catalytic core of 3 subunits MT-CO1, MT-CO2 and MT-CO3, encoded in the mitochondrial DNA, and 11 supernumerary subunits COX4I, COX5A, COX5B, COX6A, COX6B, COX6C, COX7A, COX7B, COX7C, COX8 and NDUFA4, which are encoded in the nuclear genome. The complex exists as a monomer or a dimer and forms supercomplexes (SCs) in the inner mitochondrial membrane with NADH-ubiquinone oxidoreductase (complex I, CI) and ubiquinol-cytochrome c oxidoreductase (cytochrome b-c1 complex, complex III, CIII), resulting in different assemblies (supercomplex SCI(1)III(2)IV(1) and megacomplex MCI(2)III(2)IV(2)). Found in a complex with TMEM177, COA6, COX18, COX20, SCO1 and SCO2. Interacts with TMEM177 in a COX20-dependent manner. Interacts with COX20. Interacts with COX16. Cu cation is required as a cofactor.

Its subcellular location is the mitochondrion inner membrane. The catalysed reaction is 4 Fe(II)-[cytochrome c] + O2 + 8 H(+)(in) = 4 Fe(III)-[cytochrome c] + 2 H2O + 4 H(+)(out). Its function is as follows. Component of the cytochrome c oxidase, the last enzyme in the mitochondrial electron transport chain which drives oxidative phosphorylation. The respiratory chain contains 3 multisubunit complexes succinate dehydrogenase (complex II, CII), ubiquinol-cytochrome c oxidoreductase (cytochrome b-c1 complex, complex III, CIII) and cytochrome c oxidase (complex IV, CIV), that cooperate to transfer electrons derived from NADH and succinate to molecular oxygen, creating an electrochemical gradient over the inner membrane that drives transmembrane transport and the ATP synthase. Cytochrome c oxidase is the component of the respiratory chain that catalyzes the reduction of oxygen to water. Electrons originating from reduced cytochrome c in the intermembrane space (IMS) are transferred via the dinuclear copper A center (CU(A)) of subunit 2 and heme A of subunit 1 to the active site in subunit 1, a binuclear center (BNC) formed by heme A3 and copper B (CU(B)). The BNC reduces molecular oxygen to 2 water molecules using 4 electrons from cytochrome c in the IMS and 4 protons from the mitochondrial matrix. This Antilocapra americana (Pronghorn) protein is Cytochrome c oxidase subunit 2 (MT-CO2).